Reading from the N-terminus, the 645-residue chain is MKFQLVTHFQPAGDQPQAIDSLVAGLNDNKRDQVLLGVTGSGKTFTMANVIARTNRPALIIAHNKTLAAQLYEEMKGFFPHNAVEYFISYYDYYQPEAYLPQTDTYIEKDSVINERIDMLRYSAVCSLLERRDTIVVASVSCIYGLGSPESYLSMTITLSTGDRIRINDFLNDLANLQYKRSDIRFERGYFRMRGDVIDIFPAYYEDKAWRLLLIGNEIEGISEINAITGNIIKCIDKITIFPNSYHITSRETLLRAVQPIREELNERLDYYYSQNKIVEAQRLEQRTNFDIEMMVATGTCKGIENYSRYLYGMEAGDAPPTLFEYLPEDVILFVDESHVTVPQIGAMYNGNESRKKKLIDHGFRLPSAFDNRPLKFKEWESMRPQTIYISATPGKYELARTNNLFVEQVIRPTGITDPICIVKPAEAQVYDVVHEAQVTIKRGFCVLITTLTKKMAEKLAEHMSELNMKVSYLHSDISALERIDIVYKLRSKEIDVLIGVNLLREGLDIPECGLVAILDADKEGFLRSETSLIQTIGRAARNAESRAILYADKVTGSMDRALKETERRRKKQKKYSVLHNVLPKTIIKPISNTLKEKVVVKVTTIGMNKDTVSSLRKQMLAHAKNLEFEEAAKIKNIIGRINNL.

The Helicase ATP-binding domain occupies 24-414 (AGLNDNKRDQ…LFVEQVIRPT (391 aa)). An ATP-binding site is contributed by 37-44 (GVTGSGKT). The short motif at 90 to 113 (YYDYYQPEAYLPQTDTYIEKDSVI) is the Beta-hairpin element. Positions 426-591 (AEAQVYDVVH…VLPKTIIKPI (166 aa)) constitute a Helicase C-terminal domain. One can recognise a UVR domain in the interval 610-645 (KDTVSSLRKQMLAHAKNLEFEEAAKIKNIIGRINNL).

It belongs to the UvrB family. In terms of assembly, forms a heterotetramer with UvrA during the search for lesions. Interacts with UvrC in an incision complex.

The protein localises to the cytoplasm. Functionally, the UvrABC repair system catalyzes the recognition and processing of DNA lesions. A damage recognition complex composed of 2 UvrA and 2 UvrB subunits scans DNA for abnormalities. Upon binding of the UvrA(2)B(2) complex to a putative damaged site, the DNA wraps around one UvrB monomer. DNA wrap is dependent on ATP binding by UvrB and probably causes local melting of the DNA helix, facilitating insertion of UvrB beta-hairpin between the DNA strands. Then UvrB probes one DNA strand for the presence of a lesion. If a lesion is found the UvrA subunits dissociate and the UvrB-DNA preincision complex is formed. This complex is subsequently bound by UvrC and the second UvrB is released. If no lesion is found, the DNA wraps around the other UvrB subunit that will check the other stand for damage. This chain is UvrABC system protein B, found in Wolbachia sp. subsp. Brugia malayi (strain TRS).